The chain runs to 352 residues: Palmitoyltransferase PFA5 (352 aa).

Helical transmembrane passes span 12-32 (YWTIYIVPLVVLLLMIYGTWA) and 53-73 (IGLICTCCVLDALIIAIWVLI). A DHHC domain is found at 114-164 (VWCSNCQSLKVGRTKHSSHQGHCVPRFDHYCVWLGAVIGFKNYRLFVQFVF). C144 (S-palmitoyl cysteine intermediate) is an active-site residue. Helical transmembrane passes span 159–179 (FVQFVFYFAVLLMIVWITISV) and 195–215 (LIVLLIISGIGWLMTSGLFVS).

The protein belongs to the DHHC palmitoyltransferase family. PFA5 subfamily.

It is found in the membrane. The catalysed reaction is L-cysteinyl-[protein] + hexadecanoyl-CoA = S-hexadecanoyl-L-cysteinyl-[protein] + CoA. The sequence is that of Palmitoyltransferase PFA5 (PFA5) from Candida glabrata (strain ATCC 2001 / BCRC 20586 / JCM 3761 / NBRC 0622 / NRRL Y-65 / CBS 138) (Yeast).